A 284-amino-acid polypeptide reads, in one-letter code: Ubiquitin thioesterase otubain-like (284 aa).

Residues 77–274 (GEIRYIRGDG…PGHYDVIYKK (198 aa)) enclose the OTU domain. D85 is an active-site residue. C88 acts as the Nucleophile in catalysis. I176 serves as a coordination point for substrate. Residues H245 and H267 contribute to the active site.

It belongs to the peptidase C65 family.

The catalysed reaction is Thiol-dependent hydrolysis of ester, thioester, amide, peptide and isopeptide bonds formed by the C-terminal Gly of ubiquitin (a 76-residue protein attached to proteins as an intracellular targeting signal).. Functionally, hydrolase that can remove conjugated ubiquitin from proteins and plays an important regulatory role at the level of protein turnover by preventing degradation. Specifically cleaves 'Lys-48'-linked polyubiquitin. This is Ubiquitin thioesterase otubain-like (otub-1) from Caenorhabditis elegans.